The following is a 71-amino-acid chain: Ubiquinol-cytochrome c reductase complex assembly factor 6 (71 aa).

Topologically, residues 1–8 are mitochondrial matrix; it reads MPAGVPMS. Residues 9–25 traverse the membrane as a helical; Signal-anchor for type II membrane protein segment; sequence TYLKMFAASLLAMCAGA. Residues 26 to 71 lie on the Mitochondrial intermembrane side of the membrane; it reads EVVHRYYRPDLTIPEIPPKRGELKTELLGLKERKHKPQVSQQEELK.

The protein belongs to the UQCC6 family. Interacts with UQCRC1. Interacts with UQCRQ. Interacts with UQCC5. Forms a complex, named COMB/coordinator of mitochondrial CYTB biogenesis, composed of UQCC1, UQCC2, UQCC4, UQCC5 and UQCC6; stabilizes nascent cytochrome b/MT-CYB and promotes its membrane insertion. Forms a complex, named COMA, composed of UQCC1, UQCC2 and UQCC4; activates MT-CYB translation. Forms a complex, named COMC, composed of UQCC1, UQCC2; UQCC3 and UQCC4; mediates MT-CYB hemylation and association with the first nuclear-encoded complex III subunit UQCRQ. Interacts with MT-CYB. In terms of tissue distribution, cardiac and skeletal muscle (at protein level).

It localises to the mitochondrion inner membrane. Its function is as follows. Required for the assembly and stability of the mitochondrial ubiquinol-cytochrome c reductase complex (complex III (CIII) or cytochrome b-c1 complex), a multisubunit transmembrane complex that is part of the mitochondrial electron transport chain (ETC) which drives oxidative phosphorylation. Mediates early complex III biogenesis. Participates in regulating the levels of electron transport chain proteins, and therefore energy supply, in response to changes in energy demand. Also required for cytochrome c oxidase complex (complex IV) assembly. In Homo sapiens (Human), this protein is Ubiquinol-cytochrome c reductase complex assembly factor 6.